A 299-amino-acid chain; its full sequence is Homoserine kinase (299 aa).

ATP is bound at residue 88-98 (PLGRGLGSSAT).

The protein belongs to the GHMP kinase family. Homoserine kinase subfamily.

The protein localises to the cytoplasm. The enzyme catalyses L-homoserine + ATP = O-phospho-L-homoserine + ADP + H(+). Its pathway is amino-acid biosynthesis; L-threonine biosynthesis; L-threonine from L-aspartate: step 4/5. Catalyzes the ATP-dependent phosphorylation of L-homoserine to L-homoserine phosphate. The sequence is that of Homoserine kinase from Gloeobacter violaceus (strain ATCC 29082 / PCC 7421).